Reading from the N-terminus, the 392-residue chain is Pectate lyase 3 (392 aa).

The signal sequence occupies residues 1-25; sequence MGIKHCCYILYFTLALVTLLQPVRS. Asparagine 37 carries N-linked (GlcNAc...) asparagine glycosylation. Cysteine 54 and cysteine 71 are joined by a disulfide. 3 residues coordinate Ca(2+): aspartate 194, aspartate 218, and aspartate 222. Arginine 270 is an active-site residue.

Belongs to the polysaccharide lyase 1 family. Amb a subfamily. Monomer. The cofactor is Ca(2+). In terms of processing, the N-terminus is blocked. Pollen and flowers.

It carries out the reaction Eliminative cleavage of (1-&gt;4)-alpha-D-galacturonan to give oligosaccharides with 4-deoxy-alpha-D-galact-4-enuronosyl groups at their non-reducing ends.. The protein operates within glycan metabolism; pectin degradation; 2-dehydro-3-deoxy-D-gluconate from pectin: step 2/5. Functionally, has pectate lyase activity. This Ambrosia artemisiifolia (Common ragweed) protein is Pectate lyase 3.